We begin with the raw amino-acid sequence, 145 residues long: UPF0201 protein STK_09490 (145 aa).

It belongs to the UPF0201 family.

The polypeptide is UPF0201 protein STK_09490 (Sulfurisphaera tokodaii (strain DSM 16993 / JCM 10545 / NBRC 100140 / 7) (Sulfolobus tokodaii)).